The sequence spans 86 residues: Heat shock factor-binding protein (86 aa).

Residues 34–63 (MSDSIITKIDDMGGRINELEQSINDLRAEM) adopt a coiled-coil conformation. Residues 42–52 (IDDMGGRINEL) are required for interactions with heat shock factors (HSFs). The interval 59 to 86 (LRAEMGVEGTPPPASKSGDEPKTPASSS) is disordered.

This sequence belongs to the HSBP1 family. As to quaternary structure, homohexamer. Interacts with HSFA1A, HSFA1B and HSFA2. Mostly expressed in siliques and flowers, and, to a lower extent, in roots, stems and leaves.

It is found in the nucleus. The protein localises to the cytoplasm. The protein resides in the cytosol. Negative regulator of the heat shock (HS) response. Affects negatively HSFA1B DNA-binding capacity in vitro. Involved in acquired thermotolerance but not basal thermotolerance. Crucial for seed development, after fertilization and during embryogenesis. This is Heat shock factor-binding protein from Arabidopsis thaliana (Mouse-ear cress).